Reading from the N-terminus, the 216-residue chain is MTATRAPRAARGRVPLDQRGFDFSRPDDIVCGVDEAGRGPLAGPVVAAAVILDPAQPIEGLDDSKALSAKKRDALYDLIVARSRAYCVASASVDEIDTLNILHATMLAMKRAVEGLSLMPTLAQIDGNRCPTLMVRAEAIVSGDALVPSISAASILAKVTRDRMLVELHARHPVYGFDVHAGYGTAKHLAALREHGPCEAHRRSFAPVRAALDLIR.

One can recognise an RNase H type-2 domain in the interval Asp28–Arg216. 3 residues coordinate a divalent metal cation: Asp34, Glu35, and Asp126.

Belongs to the RNase HII family. Requires Mn(2+) as cofactor. Mg(2+) is required as a cofactor.

It is found in the cytoplasm. The catalysed reaction is Endonucleolytic cleavage to 5'-phosphomonoester.. Endonuclease that specifically degrades the RNA of RNA-DNA hybrids. This chain is Ribonuclease HII, found in Burkholderia vietnamiensis (strain G4 / LMG 22486) (Burkholderia cepacia (strain R1808)).